The following is a 177-amino-acid chain: Large ribosomal subunit protein uL6 (177 aa).

This sequence belongs to the universal ribosomal protein uL6 family. As to quaternary structure, part of the 50S ribosomal subunit.

Functionally, this protein binds to the 23S rRNA, and is important in its secondary structure. It is located near the subunit interface in the base of the L7/L12 stalk, and near the tRNA binding site of the peptidyltransferase center. This Rickettsia bellii (strain OSU 85-389) protein is Large ribosomal subunit protein uL6.